The primary structure comprises 932 residues: Complement component C6 (932 aa).

A signal peptide spans Met1–Ala21. 11 cysteine pairs are disulfide-bonded: Cys22–Cys61, Cys24–Cys65, Cys35–Cys73, Cys39–Cys78, Cys82–Cys117, Cys93–Cys127, Cys96–Cys133, Cys140–Cys151, Cys146–Cys164, Cys158–Cys173, and Cys180–Cys218. 2 TSP type-1 domains span residues Cys22–Pro79 and Asn81–Lys134. C-linked (Man) tryptophan glycosylation is found at Trp29 and Trp32. Thr38 carries an O-linked (Fuc...) threonine glycan. C-linked (Man) tryptophan glycosylation occurs at Trp90. One can recognise an LDL-receptor class A domain in the interval Asp139–Gly174. 6 residues coordinate Ca(2+): Leu156, Asn159, Glu161, Asp163, Asp169, and Glu170. In terms of domain architecture, MACPF spans Lys176–Gln522. A beta stranded transmembrane segment spans residues Ser278–Ser290. Residue Asn324 is glycosylated (N-linked (GlcNAc...) asparagine). The O-linked (Fuc...) threonine glycan is linked to Thr392. Intrachain disulfides connect Cys399-Cys420, Cys499-Cys623, Cys521-Cys570, Cys523-Cys539, Cys526-Cys541, Cys543-Cys552, Cys577-Cys611, Cys589-Cys601, Cys644-Cys686, Cys672-Cys699, Cys704-Cys746, Cys732-Cys761, Cys773-Cys823, Cys784-Cys801, Cys786-Cys837, and Cys793-Cys816. Residues Ile402 to Lys415 form a beta stranded membrane-spanning segment. The region spanning Cys523–Glu553 is the EGF-like domain. Residues Asp565–Thr612 form the TSP type-1 3 domain. Trp568, Trp571, and Trp574 each carry a C-linked (Man) tryptophan glycan. 2 CCP regions span residues Cys611 to Pro688 and Asp689 to Val765. Sushi domains follow at residues Ser642 to Arg701 and Thr702 to Lys763. The segment at Ser642–Cys932 is C5b-binding domain. Factor I module (FIM) regions lie at residues Leu766–Gly840 and Lys858–Cys932. A Kazal-like 1 domain is found at Leu780–Glu839. A glycan (N-linked (GlcNAc...) asparagine) is linked at Asn859. Cystine bridges form between Cys862/Cys873, Cys867/Cys919, Cys880/Cys897, Cys882/Cys932, and Cys888/Cys912. Positions Thr876–Cys932 constitute a Kazal-like 2 domain.

The protein belongs to the complement C6/C7/C8/C9 family. As to quaternary structure, component of the membrane attack complex (MAC), composed of complement C5b, C6, C7, C8A, C8B, C8G and multiple copies of the pore-forming subunit C9. In terms of processing, all cysteine residues are assumed to be cross-linked to one another. Individual modules containing an even number of conserved cysteine residues are supposed to have disulfide linkages only within the same module.

Its subcellular location is the secreted. The protein resides in the target cell membrane. Membrane attack complex (MAC) assembly is inhibited by CD59, thereby protecting self-cells from damage during complement activation. MAC assembly is also inhibited by clusterin (CLU) chaperones that inhibit polymerization of C9. In terms of biological role, component of the membrane attack complex (MAC), a multiprotein complex activated by the complement cascade, which inserts into a target cell membrane and forms a pore, leading to target cell membrane rupture and cell lysis. The MAC is initiated by proteolytic cleavage of C5 into complement C5b in response to the classical, alternative, lectin and GZMK complement pathways. The complement pathways consist in a cascade of proteins that leads to phagocytosis and breakdown of pathogens and signaling that strengthens the adaptive immune system. Together with component C5b, involved in MAC complex assembly: complement C5b and C6 associate with the outer leaflet of target cell membrane, reducing the energy for membrane bending. This Bos taurus (Bovine) protein is Complement component C6 (C6).